The following is a 693-amino-acid chain: MSIPFGLDLGNNSSVLAVARNRGIDIIVNEVSNRSTPSLVGFGQKNRFLGESGKNKQTSNIKNTVDNLKRIVGLDYDHPDFEQESKYFSSKLVKLDDGKVGAQVRFAGKQQTFSATQLAAMYINKVKTTAVQETKGNITDVAIAVPAWYTEEQRYSIGDAAKIAGLNPVRIVNDVTAAAVSYGVFKTDLPEGEEKPRVVAFVDIGHSTYTCTIAAFKKGELKVLATAYDKHFGGRDFDRAITEHFADEFKTKYKIDIRENPKAYSRILAAAEKLKKVLSANTAAPFSVESVMNDVDVSSQLSREELEELVSPLLSRVTEPITKALAQANLTPEEVDYVEIVGGTTRIPSLKNAISEAFGKQLSTTLNQDEAIAKGAAFICAIHSPTLRVRPFKFEDIHPYSVSYSWDKQEEDEDHLEVFPAGSSYPSTKLITLQRTGDFSMQAKYTNKEELPEGTSAEIAKWDITGVQVSEGETSVPVKLKLRCDPSGLHIIEDAYTVEDIKVQELVPLPADAPEDAEPEYREVTKTVKKDTLTIIAHTFALEEKALNALIEKENELSAQDKLVAETEDRKNALEEYIYTLRGKLDEEYSDFASDDEKTRLKEMLAKAEDWLYDEGYDSIKAKYIAKYEELASLGNIIRGRYLAKEEEKRQALRSKQEASKMAELAEKLAAQRKAESEKKESKADAEGDVELD.

The disordered stretch occupies residues 665–693 (LAEKLAAQRKAESEKKESKADAEGDVELD). A compositionally biased stretch (basic and acidic residues) spans 673 to 686 (RKAESEKKESKADA).

It belongs to the heat shock protein 70 family.

It is found in the cytoplasm. This chain is Heat shock protein homolog SSE1 (SSE1), found in Lachancea kluyveri (strain ATCC 58438 / CBS 3082 / BCRC 21498 / NBRC 1685 / JCM 7257 / NCYC 543 / NRRL Y-12651) (Yeast).